Reading from the N-terminus, the 553-residue chain is ATP synthase F(1) complex subunit alpha, mitochondrial (553 aa).

The transit peptide at 1-43 directs the protein to the mitochondrion; the sequence is MLSVRVAAAVARALPRRAGLVSKNALGSSFVAARNLHASNTRL. Phosphoserine is present on residues Ser53 and Ser65. Ser76 carries the phosphoserine; alternate modification. Ser76 is a glycosylation site (O-linked (GlcNAc) serine; alternate). Residue Ser106 is modified to Phosphoserine. Lys123, Lys126, and Lys132 each carry N6-acetyllysine. Thr134 is subject to Phosphothreonine. The residue at position 161 (Lys161) is an N6-acetyllysine; alternate. Lys161 carries the N6-succinyllysine; alternate modification. Ser166 bears the Phosphoserine mark. Residue Lys167 is modified to N6-acetyllysine; alternate. Residue Lys167 is modified to N6-succinyllysine; alternate. Ser184 is modified (phosphoserine). The residue at position 204 (Arg204) is an Omega-N-methylarginine. ATP contacts are provided by Gln215, Gly217, Lys218, Thr219, and Ser220. Position 219 (Thr219) interacts with Mg(2+). 2 positions are modified to N6-acetyllysine; alternate: Lys230 and Lys239. Residues Lys230 and Lys239 each carry the N6-succinyllysine; alternate modification. An N6-acetyllysine modification is found at Lys240. Lys261 and Lys305 each carry N6-acetyllysine; alternate. N6-succinyllysine; alternate occurs at positions 261 and 305. A Mg(2+)-binding site is contributed by Asp312. At Lys427 the chain carries N6-acetyllysine; alternate. Lys427 bears the N6-succinyllysine; alternate mark. Lys434 carries the post-translational modification N6-acetyllysine. ATP is bound by residues Gln473 and Gln475. N6-acetyllysine; alternate is present on residues Lys498, Lys506, Lys531, and Lys539. An N6-succinyllysine; alternate mark is found at Lys498, Lys506, Lys531, and Lys539. Lys541 carries the N6-acetyllysine modification.

Belongs to the ATPase alpha/beta chains family. In terms of assembly, homotrimer. Component of the ATP synthase complex composed at least of ATP5F1A/subunit alpha, ATP5F1B/subunit beta, ATP5MC1/subunit c (homooctomer), MT-ATP6/subunit a, MT-ATP8/subunit 8, ATP5ME/subunit e, ATP5MF/subunit f, ATP5MG/subunit g, ATP5MK/subunit k, ATP5MJ/subunit j, ATP5F1C/subunit gamma, ATP5F1D/subunit delta, ATP5F1E/subunit epsilon, ATP5PF/subunit F6, ATP5PB/subunit b, ATP5PD/subunit d, ATP5PO/subunit OSCP. ATP synthase complex consists of a soluble F(1) head domain (subunits alpha(3) and beta(3)) - the catalytic core - and a membrane F(0) domain - the membrane proton channel (subunits c, a, 8, e, f, g, k and j). These two domains are linked by a central stalk (subunits gamma, delta, and epsilon) rotating inside the F1 region and a stationary peripheral stalk (subunits F6, b, d, and OSCP). Interacts with ATPAF2. Interacts with HRG; the interaction occurs on the surface of T-cells and alters the cell morphology when associated with concanavalin (in vitro). Interacts with PLG (angiostatin peptide); the interaction inhibits most of the angiogenic properties of angiostatin. Interacts with BLOC1S1. Interacts with BCL2L1 isoform BCL-X(L); the interaction mediates the association of BCL2L1 isoform BCL-X(L) with the mitochondrial membrane F(1)F(0) ATP synthase and enhances neurons metabolic efficiency. Interacts with CLN5 and PPT1. Interacts with S100A1; this interaction increases F1-ATPase activity. Interacts with ABCB7; this interaction allows the regulation of cellular iron homeostasis and cellular reactive oxygen species (ROS) levels in cardiomyocytes. Acetylated on lysine residues. BLOC1S1 is required for acetylation. As to expression, expressed in heart (at protein level).

The protein localises to the mitochondrion. It localises to the mitochondrion inner membrane. The protein resides in the cell membrane. Its function is as follows. Subunit alpha, of the mitochondrial membrane ATP synthase complex (F(1)F(0) ATP synthase or Complex V) that produces ATP from ADP in the presence of a proton gradient across the membrane which is generated by electron transport complexes of the respiratory chain. ATP synthase complex consist of a soluble F(1) head domain - the catalytic core - and a membrane F(1) domain - the membrane proton channel. These two domains are linked by a central stalk rotating inside the F(1) region and a stationary peripheral stalk. During catalysis, ATP synthesis in the catalytic domain of F(1) is coupled via a rotary mechanism of the central stalk subunits to proton translocation. In vivo, can only synthesize ATP although its ATP hydrolase activity can be activated artificially in vitro. With the catalytic subunit beta (ATP5F1B), forms the catalytic core in the F(1) domain. Subunit alpha does not bear the catalytic high-affinity ATP-binding sites. This chain is ATP synthase F(1) complex subunit alpha, mitochondrial, found in Sus scrofa (Pig).